We begin with the raw amino-acid sequence, 56 residues long: DTECVCTKELHRVCGSDGVTYDNECLATCHGASVAHDHACEGHEEHHVDEHGEDHD.

Residues 1 to 42 (DTECVCTKELHRVCGSDGVTYDNECLATCHGASVAHDHACEG) enclose the Kazal-like domain. Disulfide bonds link C4–C29, C6–C25, and C14–C40.

Functionally, proteinase inhibitor. Blocks the activity of trypsin, plasmin and sperm acrosin. This chain is Bdellin B-3, found in Hirudo medicinalis (Medicinal leech).